The chain runs to 289 residues: Nucleotide-binding protein COPRO5265_0725 (289 aa).

9–16 contributes to the ATP binding site; that stretch reads GLSGAGKS. 59 to 62 is a GTP binding site; the sequence is DSRS.

It belongs to the RapZ-like family.

Displays ATPase and GTPase activities. This is Nucleotide-binding protein COPRO5265_0725 from Coprothermobacter proteolyticus (strain ATCC 35245 / DSM 5265 / OCM 4 / BT).